Here is a 648-residue protein sequence, read N- to C-terminus: Acetyl-coenzyme A synthetase (648 aa).

CoA contacts are provided by residues 190-193 (RGGK), Thr308, and Asn332. ATP contacts are provided by residues 384–386 (GEP), 408–413 (DTWWQT), Asp497, and Arg512. Ser520 is a CoA binding site. Arg523 is an ATP binding site. Mg(2+) is bound by residues Val534, His536, and Val539. Arg581 serves as a coordination point for CoA. An N6-acetyllysine modification is found at Lys606.

It belongs to the ATP-dependent AMP-binding enzyme family. Mg(2+) is required as a cofactor. In terms of processing, acetylated. Deacetylation by the SIR2-homolog deacetylase activates the enzyme.

The enzyme catalyses acetate + ATP + CoA = acetyl-CoA + AMP + diphosphate. Catalyzes the conversion of acetate into acetyl-CoA (AcCoA), an essential intermediate at the junction of anabolic and catabolic pathways. AcsA undergoes a two-step reaction. In the first half reaction, AcsA combines acetate with ATP to form acetyl-adenylate (AcAMP) intermediate. In the second half reaction, it can then transfer the acetyl group from AcAMP to the sulfhydryl group of CoA, forming the product AcCoA. In Bradyrhizobium diazoefficiens (strain JCM 10833 / BCRC 13528 / IAM 13628 / NBRC 14792 / USDA 110), this protein is Acetyl-coenzyme A synthetase.